The sequence spans 235 residues: Calcium-activated potassium channel subunit beta-2 (235 aa).

Residues 1 to 45 (MFIWTSGRTSSSYRQDEKRNIYQKIRDHDLLDKRKTVTALKAGED) form a ball and chain region. The Cytoplasmic portion of the chain corresponds to 1–46 (MFIWTSGRTSSSYRQDEKRNIYQKIRDHDLLDKRKTVTALKAGEDR). A helical membrane pass occupies residues 47 to 67 (AILLGLAMMVCSIMMYFLLGI). At 68-194 (TLLRSYMQSV…VILTKLYSSN (127 aa)) the chain is on the extracellular side. N88, N96, and N119 each carry an N-linked (GlcNAc...) asparagine glycan. The helical transmembrane segment at 195 to 215 (VLFHSLFWPTCMMAGGVAIVA) threads the bilayer. Topologically, residues 216-235 (MVKLTQYLSLLCERIQRINR) are cytoplasmic.

This sequence belongs to the KCNMB (TC 8.A.14.1) family. KCNMB2 subfamily. In terms of assembly, interacts with KCNMA1 tetramer. There are probably 4 molecules of KCMNB2 per KCNMA1 tetramer. In terms of processing, N-glycosylated.

The protein resides in the membrane. Its function is as follows. Regulatory subunit of the calcium activated potassium KCNMA1 (maxiK) channel. Modulates the calcium sensitivity and gating kinetics of KCNMA1, thereby contributing to KCNMA1 channel diversity. Acts as a negative regulator that confers rapid and complete inactivation of KCNMA1 channel complex. In Mus musculus (Mouse), this protein is Calcium-activated potassium channel subunit beta-2 (Kcnmb2).